We begin with the raw amino-acid sequence, 177 residues long: Peptide methionine sulfoxide reductase MsrA (177 aa).

The active site involves C10.

This sequence belongs to the MsrA Met sulfoxide reductase family.

The catalysed reaction is L-methionyl-[protein] + [thioredoxin]-disulfide + H2O = L-methionyl-(S)-S-oxide-[protein] + [thioredoxin]-dithiol. It catalyses the reaction [thioredoxin]-disulfide + L-methionine + H2O = L-methionine (S)-S-oxide + [thioredoxin]-dithiol. Has an important function as a repair enzyme for proteins that have been inactivated by oxidation. Catalyzes the reversible oxidation-reduction of methionine sulfoxide in proteins to methionine. The chain is Peptide methionine sulfoxide reductase MsrA from Saccharolobus solfataricus (strain ATCC 35092 / DSM 1617 / JCM 11322 / P2) (Sulfolobus solfataricus).